A 229-amino-acid polypeptide reads, in one-letter code: Urease accessory protein UreF (229 aa).

Belongs to the UreF family. As to quaternary structure, ureD, UreF and UreG form a complex that acts as a GTP-hydrolysis-dependent molecular chaperone, activating the urease apoprotein by helping to assemble the nickel containing metallocenter of UreC. The UreE protein probably delivers the nickel.

The protein localises to the cytoplasm. Functionally, required for maturation of urease via the functional incorporation of the urease nickel metallocenter. The sequence is that of Urease accessory protein UreF from Nostoc sp. (strain PCC 7120 / SAG 25.82 / UTEX 2576).